We begin with the raw amino-acid sequence, 293 residues long: Protein PET54 (293 aa).

The protein resides in the mitochondrion inner membrane. Functionally, activator of specific mitochondrial mRNAs. PET54 is involved in the excision of intron aI5-beta from pre-mRNA for cytochrome c oxidase I (COX1) and plays a role in promoting the translation of COX3. This Saccharomyces cerevisiae (strain ATCC 204508 / S288c) (Baker's yeast) protein is Protein PET54 (PET54).